The sequence spans 514 residues: MVLDLDLFRVDKGGDPALIRETQEKRFKDPGLVDQLVKADSEWRRCRFRADNLNKLKNLCSKTIGEKMKKKEPVEDDESVPENVLNFDDLTADALANLKVSQIKKVRLLIDEAILKCDAERIKLEAERFENLREIGNLLHPSVPISNDEDADNKVERIWGDCTVRKKYSHVDLVVMVDGFEGEKGAVVAGSRGYFLKGVLVFLEQALIQYALRTLGSRGYTPIYTPFFMRKEVMQEVAQLSQFDEELYKVIGKGSEKSDDNSYDEKYLIATSEQPIAALHRDEWLRPEDLPIKYAGLSTCFRQEVGSHGRDTRGIFRVHQFEKIEQFVYSSPHDNKSWEMFEEMITTAEEFYQSLGIPYHIVNIVSGSLNHAASKKLDLEAWFPGSGAFRELVSCSNCTDYQARRLRIRYGQTKKMMDKVEFVHMLNATMCATTRTICAILENYQTEKGITVPEKLKEFMPPGLQELIPFVKPAPIDQEPSKKQKKQHEGSKKKAAARDVALESRLQNMEVTDA.

At Met1 the chain carries N-acetylmethionine. Residues 9–61 form an interaction with tRNA region; the sequence is RVDKGGDPALIRETQEKRFKDPGLVDQLVKADSEWRRCRFRADNLNKLKNLCS. Ser241 carries the post-translational modification Phosphoserine. Residues Thr271 and Arg302 each coordinate L-serine. Residues 302–304 and 318–321 contribute to the ATP site; these read RQE and VHQF. Lys323 is modified (N6-acetyllysine). Glu325 serves as a coordination point for L-serine. 391 to 394 is a binding site for ATP; the sequence is ELVS. Asn427 serves as a coordination point for L-serine. A disordered region spans residues 471 to 514; that stretch reads VKPAPIDQEPSKKQKKQHEGSKKKAAARDVALESRLQNMEVTDA. The span at 479–502 shows a compositional bias: basic and acidic residues; that stretch reads EPSKKQKKQHEGSKKKAAARDVAL. Positions 482–494 match the Nuclear localization signal motif; it reads KKQKKQHEGSKKK. Residues 505 to 514 show a composition bias toward polar residues; it reads RLQNMEVTDA.

This sequence belongs to the class-II aminoacyl-tRNA synthetase family. Type-1 seryl-tRNA synthetase subfamily. As to quaternary structure, homodimer. The tRNA molecule may bind across the dimer. Interacts with SIRT2. Interacts with METTL6; interaction is required for the tRNA N(3)-methylcytidine methyltransferase activity of METTL6.

The protein resides in the cytoplasm. Its subcellular location is the nucleus. The enzyme catalyses tRNA(Ser) + L-serine + ATP = L-seryl-tRNA(Ser) + AMP + diphosphate + H(+). The catalysed reaction is tRNA(Sec) + L-serine + ATP = L-seryl-tRNA(Sec) + AMP + diphosphate + H(+). Its pathway is aminoacyl-tRNA biosynthesis; selenocysteinyl-tRNA(Sec) biosynthesis; L-seryl-tRNA(Sec) from L-serine and tRNA(Sec): step 1/1. Catalyzes the attachment of serine to tRNA(Ser) in a two-step reaction: serine is first activated by ATP to form Ser-AMP and then transferred to the acceptor end of tRNA(Ser). Is probably also able to aminoacylate tRNA(Sec) with serine, to form the misacylated tRNA L-seryl-tRNA(Sec), which will be further converted into selenocysteinyl-tRNA(Sec). In the nucleus, binds to the VEGFA core promoter and prevents MYC binding and transcriptional activation by MYC. Recruits SIRT2 to the VEGFA promoter, promoting deacetylation of histone H4 at 'Lys-16' (H4K16). Thereby, inhibits the production of VEGFA and sprouting angiogenesis mediated by VEGFA. The protein is Serine--tRNA ligase, cytoplasmic (SARS1) of Macaca fascicularis (Crab-eating macaque).